Reading from the N-terminus, the 232-residue chain is TIR domain-containing adapter molecule 2 (232 aa).

Positions 1–10 (MGIGKSKMDP) are enriched in basic and acidic residues. The interval 1 to 71 (MGIGKSKMDP…VEERPEEDTE (71 aa)) is disordered. Gly2 carries the N-myristoyl glycine lipid modification. The segment covering 19-29 (KSQSVDTSQSH) has biased composition (polar residues). Residues 30-42 (HMSDSKQSEEISL) are compositionally biased toward basic and acidic residues. Positions 55 to 71 (PAEEQEGVEERPEEDTE) are enriched in acidic residues. Positions 70-226 (TEEEVFLKFV…AIWKETRNTV (157 aa)) constitute a TIR domain. Phosphotyrosine is present on Tyr164.

Homodimer. Interacts with TLR4, TICAM1, IRF3 and IRF7 in response to LPS. Interacts with IL1R1, IL1RAP, IRAK2, IRAK3 and TRAF6. Interacts with protein kinase-inactive mutants of IRAK1 and IRAK4. Isoform 1 interacts with isoform 2; the interaction occurs in late endosomes and disrupts the interaction between isoform 1 and TICAM1. Interacts with MYD88; the interaction decreases after IL-18 stimulation in a time-dependent manner. Interacts with IL18R1 and IL18RAP. Interacts with TLR2. Interacts with RAB11FIP2. Post-translationally, myristoylated. Required for membrane association which is critical for its ability to initiate efficient signaling. In terms of processing, phosphorylated by PRKCE in response to LPS. Phosphorylation is essential for its function. It is depleted from the membrane upon phosphorylation. Tyrosine phosphorylation is inhibited by phosphatase PTPN4.

It localises to the cytoplasm. It is found in the golgi apparatus. Its subcellular location is the cell membrane. The protein resides in the endoplasmic reticulum. The protein localises to the early endosome. It localises to the late endosome. It is found in the cell projection. Its subcellular location is the phagocytic cup. Functions as a sorting adapter in different signaling pathways to facilitate downstream signaling leading to type I interferon induction. In TLR4 signaling, physically bridges TLR4 and TICAM1 and functionally transmits signal to TICAM1 in early endosomes after endocytosis of TLR4. In TLR2 signaling, physically bridges TLR2 and MYD88 and is required for the TLR2-dependent movement of MYD88 to endosomes following ligand engagement. Involved in IL-18 signaling and is proposed to function as a sorting adapter for MYD88 in IL-18 signaling during adaptive immune response. Forms a complex with RAB11FIP2 that is recruited to the phagosomes to promote the activation of the actin-regulatory GTPases RAC1 and CDC42 and subsequent phagocytosis of Gram-negative bacteria. In Bos taurus (Bovine), this protein is TIR domain-containing adapter molecule 2 (TICAM2).